The primary structure comprises 396 residues: Argininosuccinate synthase (396 aa).

Position 9 to 17 (9 to 17) interacts with ATP; that stretch reads AYSGGLDTS. Position 85 (Y85) interacts with L-citrulline. G115 provides a ligand contact to ATP. L-aspartate-binding residues include T117, N121, and D122. N121 is a binding site for L-citrulline. L-citrulline-binding residues include R125, S173, E258, and Y270.

It belongs to the argininosuccinate synthase family. Type 1 subfamily. In terms of assembly, homotetramer.

The protein resides in the cytoplasm. The catalysed reaction is L-citrulline + L-aspartate + ATP = 2-(N(omega)-L-arginino)succinate + AMP + diphosphate + H(+). It participates in amino-acid biosynthesis; L-arginine biosynthesis; L-arginine from L-ornithine and carbamoyl phosphate: step 2/3. The polypeptide is Argininosuccinate synthase (Streptococcus agalactiae serotype V (strain ATCC BAA-611 / 2603 V/R)).